Here is a 261-residue protein sequence, read N- to C-terminus: Ribosome biogenesis protein NSA2 (261 aa).

Residues 1–40 (MPQNDYIERHIKQHGKRLDHEERKRKREARESHKISERAQ) show a composition bias toward basic and acidic residues. A disordered region spans residues 1-43 (MPQNDYIERHIKQHGKRLDHEERKRKREARESHKISERAQKLT). 2 short sequence motifs (nuclear localization signal) span residues 15-22 (GKRLDHEE) and 51-58 (AKKRYAEK). The segment at 61-87 (MRKKIKAHEQSKVKGSSKPLDTDGDAL) is disordered.

Belongs to the eukaryotic ribosomal protein eS8 family. Ribosome biogenesis protein NSA2 subfamily. Component of the pre-66S ribosomal particle. Interacts with NOP7 and RRP1. Interacts with RSA4 (via WD repeats).

The protein localises to the nucleus. The protein resides in the nucleolus. In terms of biological role, involved in the biogenesis of the 60S ribosomal subunit. May play a part in the quality control of pre-60S particles. Under normal, rapid growth conditions, high levels of NSA2 would allow the progression of pre-60S particles through the ITS2 processing. This is Ribosome biogenesis protein NSA2 (NSA2) from Saccharomyces cerevisiae (strain YJM789) (Baker's yeast).